A 324-amino-acid polypeptide reads, in one-letter code: Adenine deaminase (324 aa).

Zn(2+) is bound by residues His-11, His-13, and His-189. The active-site Proton donor is Glu-192. Asp-270 is a Zn(2+) binding site. Residue Asp-271 coordinates substrate.

This sequence belongs to the metallo-dependent hydrolases superfamily. Adenosine and AMP deaminases family. Adenine deaminase type 2 subfamily. Requires Zn(2+) as cofactor.

The enzyme catalyses adenine + H2O + H(+) = hypoxanthine + NH4(+). Functionally, catalyzes the hydrolytic deamination of adenine to hypoxanthine. Plays an important role in the purine salvage pathway and in nitrogen catabolism. The sequence is that of Adenine deaminase from Rhizobium meliloti (strain 1021) (Ensifer meliloti).